The primary structure comprises 98 residues: Aspartyl/glutamyl-tRNA(Asn/Gln) amidotransferase subunit C (98 aa).

This sequence belongs to the GatC family. Heterotrimer of A, B and C subunits.

It catalyses the reaction L-glutamyl-tRNA(Gln) + L-glutamine + ATP + H2O = L-glutaminyl-tRNA(Gln) + L-glutamate + ADP + phosphate + H(+). The catalysed reaction is L-aspartyl-tRNA(Asn) + L-glutamine + ATP + H2O = L-asparaginyl-tRNA(Asn) + L-glutamate + ADP + phosphate + 2 H(+). In terms of biological role, allows the formation of correctly charged Asn-tRNA(Asn) or Gln-tRNA(Gln) through the transamidation of misacylated Asp-tRNA(Asn) or Glu-tRNA(Gln) in organisms which lack either or both of asparaginyl-tRNA or glutaminyl-tRNA synthetases. The reaction takes place in the presence of glutamine and ATP through an activated phospho-Asp-tRNA(Asn) or phospho-Glu-tRNA(Gln). The polypeptide is Aspartyl/glutamyl-tRNA(Asn/Gln) amidotransferase subunit C (Mycobacterium avium (strain 104)).